Here is an 828-residue protein sequence, read N- to C-terminus: Periplasmic nitrate reductase (828 aa).

The segment at residues methionine 1 to alanine 31 is a signal peptide (tat-type signal). Residues isoleucine 39–aspartate 95 form the 4Fe-4S Mo/W bis-MGD-type domain. Positions 46, 49, 53, and 81 each coordinate [4Fe-4S] cluster. Residues lysine 83, glutamine 150, asparagine 175, cysteine 179, tryptophan 212–methionine 219, serine 243–histidine 247, glutamine 262–aspartate 264, methionine 372, glutamine 376, asparagine 482, serine 508–aspartate 509, lysine 531, aspartate 558, and threonine 718–threonine 727 each bind Mo-bis(molybdopterin guanine dinucleotide). Position 794 (phenylalanine 794) interacts with substrate. Asparagine 802 and lysine 819 together coordinate Mo-bis(molybdopterin guanine dinucleotide).

Belongs to the prokaryotic molybdopterin-containing oxidoreductase family. NasA/NapA/NarB subfamily. In terms of assembly, component of the periplasmic nitrate reductase NapAB complex composed of NapA and NapB. It depends on [4Fe-4S] cluster as a cofactor. Mo-bis(molybdopterin guanine dinucleotide) serves as cofactor. Predicted to be exported by the Tat system. The position of the signal peptide cleavage has not been experimentally proven.

It is found in the periplasm. It carries out the reaction 2 Fe(II)-[cytochrome] + nitrate + 2 H(+) = 2 Fe(III)-[cytochrome] + nitrite + H2O. Functionally, catalytic subunit of the periplasmic nitrate reductase complex NapAB. Receives electrons from NapB and catalyzes the reduction of nitrate to nitrite. The protein is Periplasmic nitrate reductase of Salmonella arizonae (strain ATCC BAA-731 / CDC346-86 / RSK2980).